The chain runs to 286 residues: Undecaprenyl-diphosphatase (286 aa).

Transmembrane regions (helical) follow at residues 50 to 70, 97 to 117, 127 to 147, 165 to 185, 200 to 220, 230 to 250, and 262 to 282; these read PGVSVTAVIQLGSIVAVIAYF, LGIAMTIGTLPILFAGLAIKL, LRSVPAIAGVSILMALLLALA, GLLVGLAQVLALIPGVSRSGS, AARFSFLLGIPAITIAGLVEL, GGVLPLMVGIVSAAVVSWLAI, and TWVFVIYRLLFGILLLAWWAG.

Belongs to the UppP family.

It localises to the cell inner membrane. The catalysed reaction is di-trans,octa-cis-undecaprenyl diphosphate + H2O = di-trans,octa-cis-undecaprenyl phosphate + phosphate + H(+). Its function is as follows. Catalyzes the dephosphorylation of undecaprenyl diphosphate (UPP). Confers resistance to bacitracin. The polypeptide is Undecaprenyl-diphosphatase (Synechococcus sp. (strain WH7803)).